The following is a 323-amino-acid chain: Tyrosine recombinase XerD (323 aa).

Residues 21-106 (AEDDQAIQRF…TLRGFYALCL (86 aa)) enclose the Core-binding (CB) domain. Positions 127–317 (SLPKALTESQ…ARQHLQTLHA (191 aa)) constitute a Tyr recombinase domain. Catalysis depends on residues arginine 167, lysine 191, histidine 269, arginine 272, and histidine 295. Tyrosine 304 acts as the O-(3'-phospho-DNA)-tyrosine intermediate in catalysis.

It belongs to the 'phage' integrase family. XerD subfamily. In terms of assembly, forms a cyclic heterotetrameric complex composed of two molecules of XerC and two molecules of XerD.

The protein resides in the cytoplasm. Functionally, site-specific tyrosine recombinase, which acts by catalyzing the cutting and rejoining of the recombining DNA molecules. The XerC-XerD complex is essential to convert dimers of the bacterial chromosome into monomers to permit their segregation at cell division. It also contributes to the segregational stability of plasmids. In Xanthomonas campestris pv. campestris (strain ATCC 33913 / DSM 3586 / NCPPB 528 / LMG 568 / P 25), this protein is Tyrosine recombinase XerD.